The primary structure comprises 448 residues: ATP-dependent RNA helicase sub2 (448 aa).

Positions 19-29 (DAAATTAAPAA) are enriched in low complexity. The disordered stretch occupies residues 19–43 (DAAATTAAPAANGAQDKKGDLTVSG). A Q motif motif is present at residues 58–86 (TGFRDFLLKGELLRAITDCGFEHPSEVQQ). The Helicase ATP-binding domain occupies 89–271 (IPTAILNVDV…KKFMRNPLEV (183 aa)). An ATP-binding site is contributed by 102–109 (AKSGLGKT). The DECD box signature appears at 211-214 (DECD). Positions 283-444 (GLQQYYIKLS…EYPEGGVDSS (162 aa)) constitute a Helicase C-terminal domain.

This sequence belongs to the DEAD box helicase family. DECD subfamily.

The protein resides in the nucleus. The catalysed reaction is ATP + H2O = ADP + phosphate + H(+). Its function is as follows. ATP-binding RNA helicase involved in transcription elongation and required for the export of mRNA out of the nucleus. SUB2 also plays a role in pre-mRNA splicing and spliceosome assembly. May be involved in rDNA and telomeric silencing, and maintenance of genome integrity. The sequence is that of ATP-dependent RNA helicase sub2 (sub2) from Aspergillus fumigatus (strain ATCC MYA-4609 / CBS 101355 / FGSC A1100 / Af293) (Neosartorya fumigata).